Here is a 164-residue protein sequence, read N- to C-terminus: Peroxynitrite isomerase 2 (164 aa).

The short motif at 17–23 (GSWAGRG) is the GXWXGXG element. His-155 contacts heme b.

This sequence belongs to the nitrobindin family. As to quaternary structure, homodimer. It depends on heme b as a cofactor.

It catalyses the reaction peroxynitrite = nitrate. The protein operates within nitrogen metabolism. Its function is as follows. Heme-binding protein able to scavenge peroxynitrite and to protect free L-tyrosine against peroxynitrite-mediated nitration, by acting as a peroxynitrite isomerase that converts peroxynitrite to nitrate. Therefore, this protein likely plays a role in peroxynitrite sensing and in the detoxification of reactive nitrogen and oxygen species (RNS and ROS, respectively). Is able to bind nitric oxide (NO) in vitro, but may act as a sensor of peroxynitrite levels in vivo. The polypeptide is Peroxynitrite isomerase 2 (Mycobacterium bovis (strain BCG / Pasteur 1173P2)).